The chain runs to 516 residues: Maturase K (516 aa).

The protein belongs to the intron maturase 2 family. MatK subfamily.

The protein localises to the plastid. It is found in the chloroplast. Its function is as follows. Usually encoded in the trnK tRNA gene intron. Probably assists in splicing its own and other chloroplast group II introns. This chain is Maturase K, found in Cypripedium calceolus (Yellow lady's slipper).